Consider the following 753-residue polypeptide: Nuclear hormone receptor family member daf-12 (753 aa).

A disordered region spans residues 1 to 109 (MGTNGGVIAE…PDDGLLDSSE (109 aa)). Residues 20-29 (NPDKVEEPVV) show a composition bias toward basic and acidic residues. Residues 30–44 (RRKRVTRRRHRRIHS) are compositionally biased toward basic residues. The nuclear receptor DNA-binding region spans 115–190 (QKTCRVCGDH…VGMKKEWILN (76 aa)). NR C4-type zinc fingers lie at residues 118 to 138 (CRVC…CESC) and 154 to 173 (CPYS…CQKC). A Nuclear localization signal motif is present at residues 191-206 (EEQLRRRKNSRLNNTG). 3 disordered regions span residues 198-251 (KNSR…TINP), 266-314 (NAMP…GYDP), and 376-410 (GHPM…EKNH). Positions 201–211 (RLNNTGTCNKR) are enriched in polar residues. Positions 212–227 (SQPGNQQSPQGPNQQP) are enriched in low complexity. Polar residues-rich tracts occupy residues 285-301 (PVGS…SLTM) and 394-410 (MSLS…EKNH). The NR LBD domain occupies 516–753 (AELKALDAVR…ELPGEFFKIK (238 aa)).

This sequence belongs to the nuclear hormone receptor family. Interacts with din-1 isoform d. In terms of tissue distribution, expressed throughout muscles of the pharynx. Expressed in epidermal seam cells, the vulva, head neurons, mature spermatheca, uterus and intestine.

The protein localises to the nucleus. In terms of biological role, nuclear receptor which binds directly to response elements in target gene promoters. Activity is modulated by binding of steroid hormone ligands that include dafachronic acids. Regulates expression of genes involved in postembryonic development and the dauer diapause, in response to environmental cues. Inhibits the expression of let-7 family members when bound to corepressor din-1s which is an isoform of din-1. Plays a role in controlling the timing of seam cell development during the larval stages. Has a role in the immune response to bacterial infection, via regulation of let-7 miRNAs. Controls expression of genes that promote the aerobic catabolism of fatty acids for reproductive growth. May be involved in thermotolerance. The protein is Nuclear hormone receptor family member daf-12 of Caenorhabditis elegans.